The sequence spans 365 residues: Putative nudix hydrolase 1 (365 aa).

In terms of domain architecture, Nudix hydrolase spans 72-201 (VNYVAAAIIL…DFIRLVDEAV (130 aa)). The Nudix box motif lies at 109–130 (GRVEAGETIEEAVVREVKEETG). 2 residues coordinate Mg(2+): Glu124 and Glu128.

Belongs to the Nudix hydrolase family. The cofactor is Mg(2+). Mn(2+) is required as a cofactor.

Its function is as follows. Probably mediates the hydrolysis of some nucleoside diphosphate derivatives. This chain is Putative nudix hydrolase 1 (ndx-1), found in Caenorhabditis elegans.